Consider the following 677-residue polypeptide: mRNA 3'-end-processing protein RNA14 (677 aa).

HAT repeat units follow at residues 56–88 (ESYA…GELA), 90–124 (DEFE…YIRR), 138–170 (VIVK…FLEQ), 181–214 (QRID…WEQE), 257–289 (RTAN…WERE), and 298–330 (MLSQ…YISE).

Component of the CFIA complex, which is composed of RNA14, RNA15, PCF11 and CLP1. Interacts with FIP1, PFS2, YSH1 and probably also with RNA15. Probably interacts with the phosphorylated CTD domain of RPB1/RNA polymerase II.

The protein resides in the nucleus. Its subcellular location is the cytoplasm. Its function is as follows. Component of the cleavage factor IA (CFIA) complex, which is involved in the endonucleolytic cleavage during polyadenylation-dependent pre-mRNA 3'-end formation and cooperates with the cleavage factor NAB4/CFIB and the cleavage and polyadenylation factor (CPF) complex. This Saccharomyces cerevisiae (strain ATCC 204508 / S288c) (Baker's yeast) protein is mRNA 3'-end-processing protein RNA14 (RNA14).